The primary structure comprises 227 residues: ATP phosphoribosyltransferase (227 aa).

It belongs to the ATP phosphoribosyltransferase family. Short subfamily. Heteromultimer composed of HisG and HisZ subunits.

The protein resides in the cytoplasm. The catalysed reaction is 1-(5-phospho-beta-D-ribosyl)-ATP + diphosphate = 5-phospho-alpha-D-ribose 1-diphosphate + ATP. It participates in amino-acid biosynthesis; L-histidine biosynthesis; L-histidine from 5-phospho-alpha-D-ribose 1-diphosphate: step 1/9. Functionally, catalyzes the condensation of ATP and 5-phosphoribose 1-diphosphate to form N'-(5'-phosphoribosyl)-ATP (PR-ATP). Has a crucial role in the pathway because the rate of histidine biosynthesis seems to be controlled primarily by regulation of HisG enzymatic activity. The sequence is that of ATP phosphoribosyltransferase from Nitrosospira multiformis (strain ATCC 25196 / NCIMB 11849 / C 71).